We begin with the raw amino-acid sequence, 751 residues long: Semaphorin-3C (751 aa).

The signal sequence occupies residues Met1–Lys20. Residues Arg28–Leu511 form the Sema domain. N-linked (GlcNAc...) asparagine glycosylation occurs at Asn81. A disulfide bridge links Cys101 with Cys112. N-linked (GlcNAc...) asparagine glycosylation occurs at Asn123. A disulfide bridge links Cys130 with Cys139. N-linked (GlcNAc...) asparagine glycans are attached at residues Asn252 and Asn268. Cystine bridges form between Cys266–Cys378 and Cys290–Cys338. Residue Asn465 is glycosylated (N-linked (GlcNAc...) asparagine). A disulfide bond links Cys514 and Cys532. One can recognise an Ig-like C2-type domain in the interval Ala571–Ala655. Asn585 and Asn586 each carry an N-linked (GlcNAc...) asparagine glycan. A disulfide bridge connects residues Cys643 and Cys709. A compositionally biased stretch (basic and acidic residues) spans Thr712–Lys731. The segment at Thr712–Ser751 is disordered.

The protein belongs to the semaphorin family. Interacts with PLXND1. In terms of tissue distribution, expressed intensely in the heart, skeletal muscle, colon, small intestine, ovary, testis, and prostate. Faint expression ubiquitously among other organs, including brain.

The protein resides in the secreted. Binds to plexin family members and plays an important role in the regulation of developmental processes. Required for normal cardiovascular development during embryogenesis. Functions as attractant for growing axons, and thereby plays an important role in axon growth and axon guidance. The sequence is that of Semaphorin-3C (SEMA3C) from Homo sapiens (Human).